The primary structure comprises 129 residues: uncharacterized protein (129 aa).

The interval serine 34–valine 57 is disordered.

This is an uncharacterized protein from Homo sapiens (Human).